The following is a 259-amino-acid chain: Bisphosphoglycerate mutase (259 aa).

At S2 the chain carries N-acetylserine. Substrate contacts are provided by residues 10 to 17 (RHGEGAWN), 23 to 24 (CS), R62, 89 to 92 (ERHY), R100, and 116 to 117 (RR). The active-site Tele-phosphohistidine intermediate is the H11. E89 (proton donor/acceptor) is an active-site residue. T122 carries the phosphothreonine modification. 189 to 190 (GN) serves as a coordination point for substrate.

This sequence belongs to the phosphoglycerate mutase family. BPG-dependent PGAM subfamily. Homodimer. As to expression, expressed in red blood cells.

It catalyses the reaction (2R)-3-phospho-glyceroyl phosphate = (2R)-2,3-bisphosphoglycerate + H(+). The enzyme catalyses (2R)-2-phosphoglycerate = (2R)-3-phosphoglycerate. Its activity is regulated as follows. At alkaline pH BPGM favors the synthase reaction; however, at lower pH the phosphatase reaction is dominant. Inhibited by citrate. Plays a major role in regulating hemoglobin oxygen affinity by controlling the levels of its allosteric effector 2,3-bisphosphoglycerate (2,3-BPG). Also exhibits mutase (EC 5.4.2.11) activity. In Oryctolagus cuniculus (Rabbit), this protein is Bisphosphoglycerate mutase (BPGM).